The primary structure comprises 367 residues: 2-aminoethylphosphonate--pyruvate transaminase (367 aa).

Position 194 is an N6-(pyridoxal phosphate)lysine (Lys-194).

This sequence belongs to the class-V pyridoxal-phosphate-dependent aminotransferase family. PhnW subfamily. As to quaternary structure, homodimer. Pyridoxal 5'-phosphate serves as cofactor.

It catalyses the reaction (2-aminoethyl)phosphonate + pyruvate = phosphonoacetaldehyde + L-alanine. Its function is as follows. Involved in phosphonate degradation. The protein is 2-aminoethylphosphonate--pyruvate transaminase of Salmonella dublin (strain CT_02021853).